A 205-amino-acid polypeptide reads, in one-letter code: Outer-membrane lipoprotein carrier protein (205 aa).

A signal peptide spans 1-19 (MKKIIICFIFVFSINVSFA).

This sequence belongs to the LolA family. Monomer.

The protein localises to the periplasm. Functionally, participates in the translocation of lipoproteins from the inner membrane to the outer membrane. Only forms a complex with a lipoprotein if the residue after the N-terminal Cys is not an aspartate (The Asp acts as a targeting signal to indicate that the lipoprotein should stay in the inner membrane). The polypeptide is Outer-membrane lipoprotein carrier protein (Francisella tularensis subsp. tularensis (strain FSC 198)).